The following is a 509-amino-acid chain: tRNA-2-methylthio-N(6)-dimethylallyladenosine synthase (509 aa).

A compositionally biased stretch (polar residues) spans 1 to 13 (MNEQQRLASQQAN). The disordered stretch occupies residues 1–26 (MNEQQRLASQQANSSKKKEEKDYSKY). Residues 16–25 (KKKEEKDYSK) are compositionally biased toward basic and acidic residues. Residues 66–184 (RKFYIRTYGC…LPYILKDAMF (119 aa)) form the MTTase N-terminal domain. [4Fe-4S] cluster is bound by residues C75, C111, C145, C221, C225, and C228. A Radical SAM core domain is found at 207 to 437 (RRGDIKAWVN…NALVNKLAIE (231 aa)). In terms of domain architecture, TRAM spans 440–503 (NRYKGQIVEV…TWSLNGELVE (64 aa)).

Belongs to the methylthiotransferase family. MiaB subfamily. In terms of assembly, monomer. It depends on [4Fe-4S] cluster as a cofactor.

The protein localises to the cytoplasm. The enzyme catalyses N(6)-dimethylallyladenosine(37) in tRNA + (sulfur carrier)-SH + AH2 + 2 S-adenosyl-L-methionine = 2-methylsulfanyl-N(6)-dimethylallyladenosine(37) in tRNA + (sulfur carrier)-H + 5'-deoxyadenosine + L-methionine + A + S-adenosyl-L-homocysteine + 2 H(+). In terms of biological role, catalyzes the methylthiolation of N6-(dimethylallyl)adenosine (i(6)A), leading to the formation of 2-methylthio-N6-(dimethylallyl)adenosine (ms(2)i(6)A) at position 37 in tRNAs that read codons beginning with uridine. This Bacillus cereus (strain ATCC 10987 / NRS 248) protein is tRNA-2-methylthio-N(6)-dimethylallyladenosine synthase.